Reading from the N-terminus, the 421-residue chain is Medium-chain specific acyl-CoA dehydrogenase, mitochondrial (421 aa).

Residues 1-25 constitute a mitochondrion transit peptide; the sequence is MIALFRRSCGVLRSLSHFDWRSQHT. Lysine 69 is subject to N6-acetyllysine; alternate. Lysine 69 carries the post-translational modification N6-succinyllysine; alternate. Lysine 79 is subject to N6-acetyllysine. 158–167 serves as a coordination point for FAD; the sequence is YCVTEPVAGS. Position 167 (serine 167) interacts with octanoyl-CoA. The residue at position 179 (lysine 179) is an N6-succinyllysine. 191 to 193 is a binding site for FAD; the sequence is WIT. N6-acetyllysine; alternate is present on lysine 212. Lysine 212 carries the N6-succinyllysine; alternate modification. Serine 216 contacts octanoyl-CoA. Lysine 217, lysine 259, and lysine 271 each carry N6-acetyllysine; alternate. An N6-succinyllysine; alternate mark is found at lysine 217, lysine 259, and lysine 271. Aspartate 278 lines the octanoyl-CoA pocket. Lysine 279 carries the post-translational modification N6-acetyllysine. Arginine 281 serves as a coordination point for octanoyl-CoA. The residue at position 301 (lysine 301) is an N6-acetyllysine. FAD contacts are provided by residues 306-308 and 316-317; these read RKT and HQ. Residues arginine 349 and threonine 351 each coordinate octanoyl-CoA. A Phosphothreonine modification is found at threonine 351. 374 to 378 provides a ligand contact to FAD; that stretch reads QIFGG. Glutamate 401 is a binding site for octanoyl-CoA. Glutamate 401 (proton acceptor) is an active-site residue. Position 402–405 (402–405) interacts with FAD; it reads GTAQ.

The protein belongs to the acyl-CoA dehydrogenase family. Homotetramer. Interacts with the heterodimeric electron transfer flavoprotein ETF. The cofactor is FAD. Post-translationally, acetylated. Could occur at proximity of the cofactor-binding sites and reduce the catalytic activity. Could be deacetylated by SIRT3.

It localises to the mitochondrion matrix. The catalysed reaction is a medium-chain 2,3-saturated fatty acyl-CoA + oxidized [electron-transfer flavoprotein] + H(+) = a medium-chain (2E)-enoyl-CoA + reduced [electron-transfer flavoprotein]. It catalyses the reaction pentanoyl-CoA + oxidized [electron-transfer flavoprotein] + H(+) = (2E)-pentenoyl-CoA + reduced [electron-transfer flavoprotein]. It carries out the reaction hexanoyl-CoA + oxidized [electron-transfer flavoprotein] + H(+) = (2E)-hexenoyl-CoA + reduced [electron-transfer flavoprotein]. The enzyme catalyses octanoyl-CoA + oxidized [electron-transfer flavoprotein] + H(+) = (2E)-octenoyl-CoA + reduced [electron-transfer flavoprotein]. The catalysed reaction is decanoyl-CoA + oxidized [electron-transfer flavoprotein] + H(+) = (2E)-decenoyl-CoA + reduced [electron-transfer flavoprotein]. It catalyses the reaction dodecanoyl-CoA + oxidized [electron-transfer flavoprotein] + H(+) = (2E)-dodecenoyl-CoA + reduced [electron-transfer flavoprotein]. It carries out the reaction tetradecanoyl-CoA + oxidized [electron-transfer flavoprotein] + H(+) = (2E)-tetradecenoyl-CoA + reduced [electron-transfer flavoprotein]. The enzyme catalyses oxidized [electron-transfer flavoprotein] + hexadecanoyl-CoA + H(+) = (2E)-hexadecenoyl-CoA + reduced [electron-transfer flavoprotein]. It participates in lipid metabolism; mitochondrial fatty acid beta-oxidation. Its function is as follows. Medium-chain specific acyl-CoA dehydrogenase is one of the acyl-CoA dehydrogenases that catalyze the first step of mitochondrial fatty acid beta-oxidation, an aerobic process breaking down fatty acids into acetyl-CoA and allowing the production of energy from fats. The first step of fatty acid beta-oxidation consists in the removal of one hydrogen from C-2 and C-3 of the straight-chain fatty acyl-CoA thioester, resulting in the formation of trans-2-enoyl-CoA. Electron transfer flavoprotein (ETF) is the electron acceptor that transfers electrons to the main mitochondrial respiratory chain via ETF-ubiquinone oxidoreductase (ETF dehydrogenase). Among the different mitochondrial acyl-CoA dehydrogenases, medium-chain specific acyl-CoA dehydrogenase acts specifically on acyl-CoAs with saturated 6 to 12 carbons long primary chains. The polypeptide is Medium-chain specific acyl-CoA dehydrogenase, mitochondrial (Bos taurus (Bovine)).